We begin with the raw amino-acid sequence, 277 residues long: Sarcosine/dimethylglycine N-methyltransferase (277 aa).

It belongs to the methyltransferase superfamily. In terms of assembly, monomer.

It catalyses the reaction sarcosine + 2 S-adenosyl-L-methionine = glycine betaine + 2 S-adenosyl-L-homocysteine + 2 H(+). It carries out the reaction sarcosine + S-adenosyl-L-methionine = N,N-dimethylglycine + S-adenosyl-L-homocysteine + H(+). The enzyme catalyses N,N-dimethylglycine + S-adenosyl-L-methionine = glycine betaine + S-adenosyl-L-homocysteine + H(+). The protein operates within amine and polyamine biosynthesis; betaine biosynthesis via glycine pathway; betaine from glycine: step 2/3. It participates in amine and polyamine biosynthesis; betaine biosynthesis via glycine pathway; betaine from glycine: step 3/3. Inhibited by n-butylic acid and S-adenosyl-L-homocysteine. Catalyzes the methylation of sarcosine and dimethylglycine to dimethylglycine and betaine, respectively, with S-adenosylmethionine (AdoMet) acting as the methyl donor. Activity with sarcosine is much weaker than activity with dimethylglycine. The protein is Sarcosine/dimethylglycine N-methyltransferase of Aphanothece halophytica.